Reading from the N-terminus, the 494-residue chain is Aspartyl/glutamyl-tRNA(Asn/Gln) amidotransferase subunit B (494 aa).

This sequence belongs to the GatB/GatE family. GatB subfamily. As to quaternary structure, heterotrimer of A, B and C subunits.

The enzyme catalyses L-glutamyl-tRNA(Gln) + L-glutamine + ATP + H2O = L-glutaminyl-tRNA(Gln) + L-glutamate + ADP + phosphate + H(+). It carries out the reaction L-aspartyl-tRNA(Asn) + L-glutamine + ATP + H2O = L-asparaginyl-tRNA(Asn) + L-glutamate + ADP + phosphate + 2 H(+). Functionally, allows the formation of correctly charged Asn-tRNA(Asn) or Gln-tRNA(Gln) through the transamidation of misacylated Asp-tRNA(Asn) or Glu-tRNA(Gln) in organisms which lack either or both of asparaginyl-tRNA or glutaminyl-tRNA synthetases. The reaction takes place in the presence of glutamine and ATP through an activated phospho-Asp-tRNA(Asn) or phospho-Glu-tRNA(Gln). This Nitrobacter hamburgensis (strain DSM 10229 / NCIMB 13809 / X14) protein is Aspartyl/glutamyl-tRNA(Asn/Gln) amidotransferase subunit B.